The following is a 601-amino-acid chain: Rhizobactin siderophore biosynthesis protein RhbF (601 aa).

This sequence belongs to the IucA/IucC family.

It functions in the pathway siderophore biosynthesis; rhizobactin biosynthesis. This Rhizobium meliloti (strain 1021) (Ensifer meliloti) protein is Rhizobactin siderophore biosynthesis protein RhbF (rhbF).